The chain runs to 1193 residues: Protein diaphanous homolog 3 (1193 aa).

Basic residues predominate over residues 1–10 (MERHQPRLHH). Residues 1–57 (MERHQPRLHHPAQGSAAGTPYPSSASLRGCRESKMPRRKGPQHPPPPSGPEEPGEKR) form a disordered region. Serine 26 carries the phosphoserine modification. The Nuclear localization signal motif lies at 36–60 (PRRKGPQHPPPPSGPEEPGEKRPKF). Threonine 68 is modified (phosphothreonine). Residues serine 77 and serine 175 each carry the phosphoserine modification. Positions 114–476 (PKPLSENELL…QIVLHRDGMD (363 aa)) constitute a GBD/FH3 domain. Residues 497–554 (IDQAKLEEFEEKASELYKKFEKEFTDHQETQAELQKKEAKINELQAELQAFKSQFGAL) adopt a coiled-coil conformation. The disordered stretch occupies residues 558–622 (CNIPLPPSKE…PPPLGFLGGQ (65 aa)). Positions 561–631 (PLPPSKEGGT…QNSPPLPILP (71 aa)) constitute an FH1 domain. Residues 575 to 600 (LPPPPPLPSGGGVPPPPPPPPPPPLP) are compositionally biased toward pro residues. Serine 624 is subject to Phosphoserine. Residues 636-1034 (PKKEFKPEIS…EKRVRIAKEL (399 aa)) enclose the FH2 domain. Residues 1013–1056 (KENIKKREAEEKEKRVRIAKELAERERLERQQKKKRLLEMKTEG) adopt a coiled-coil conformation. The region spanning 1057 to 1087 (DETGVMDNLLEALQSGAAFRDRRKRTPMPKD) is the DAD domain. Phosphoserine is present on residues serine 1093 and serine 1179. Residues 1184–1193 (EALLARLRAL) carry the Nuclear export signal motif.

The protein belongs to the formin homology family. Diaphanous subfamily. In terms of processing, ubiquitinated.

It is found in the cytoplasm. The protein resides in the nucleus. Its function is as follows. Actin nucleation and elongation factor required for the assembly of F-actin structures, such as actin cables and stress fibers. Required for cytokinesis, stress fiber formation and transcriptional activation of the serum response factor. Binds to GTP-bound form of Rho and to profilin: acts in a Rho-dependent manner to recruit profilin to the membrane, where it promotes actin polymerization. DFR proteins couple Rho and Src tyrosine kinase during signaling and the regulation of actin dynamics. Also acts as an actin nucleation and elongation factor in the nucleus by promoting nuclear actin polymerization inside the nucleus to drive serum-dependent SRF-MRTFA activity. The sequence is that of Protein diaphanous homolog 3 (DIAPH3) from Homo sapiens (Human).